The primary structure comprises 77 residues: MSINIKDLIMKIAKENKIALNMDNLNIELKSLGIDSLSAMNLIMKIEDQIGVQLPDEKLLKIKNLRDLINAFEDVLK.

The Carrier domain occupies 1-76; that stretch reads MSINIKDLIM…DLINAFEDVL (76 aa). Ser36 is subject to O-(pantetheine 4'-phosphoryl)serine.

In terms of processing, 4'-phosphopantetheine is transferred from CoA to a specific serine of the apo-ACP-like protein.

The protein operates within lipid metabolism; fatty acid biosynthesis. Functionally, carrier of the growing fatty acid chain in fatty acid biosynthesis. The polypeptide is Acyl carrier protein homolog (Ureaplasma parvum serovar 3 (strain ATCC 700970)).